Here is a 92-residue protein sequence, read N- to C-terminus: Small ribosomal subunit protein uS19 (92 aa).

This sequence belongs to the universal ribosomal protein uS19 family.

In terms of biological role, protein S19 forms a complex with S13 that binds strongly to the 16S ribosomal RNA. This is Small ribosomal subunit protein uS19 from Polaromonas sp. (strain JS666 / ATCC BAA-500).